The chain runs to 194 residues: MPKIGMEPLRRRELIDAAIRTIGQRGSLDVTVAQIAHEAGVSPALAHHYFGGKDKLILATMRHLLRELGQDLNAAIGRTETPRERIAAIIAVNFSASQFAQETIAAWLTFYVHAQQSEDTRRLLRIYARRLHSNLVFALEQLTSRERASRIAEGAGAMIDGLYIRHALGADAPNAASAIALVEDYIAVQLMGEK.

In terms of domain architecture, HTH tetR-type spans 8–68; that stretch reads PLRRRELIDA…ATMRHLLREL (61 aa). The H-T-H motif DNA-binding region spans 31–50; it reads TVAQIAHEAGVSPALAHHYF.

The protein operates within amine and polyamine biosynthesis; betaine biosynthesis via choline pathway [regulation]. In terms of biological role, repressor involved in the biosynthesis of the osmoprotectant glycine betaine. It represses transcription of the choline transporter BetT and the genes of BetAB involved in the synthesis of glycine betaine. The sequence is that of HTH-type transcriptional regulator BetI from Brucella anthropi (strain ATCC 49188 / DSM 6882 / CCUG 24695 / JCM 21032 / LMG 3331 / NBRC 15819 / NCTC 12168 / Alc 37) (Ochrobactrum anthropi).